Reading from the N-terminus, the 267-residue chain is UPF0328 protein ECU06_0070 (267 aa).

This sequence belongs to the UPF0328 family.

In Encephalitozoon cuniculi (strain GB-M1) (Microsporidian parasite), this protein is UPF0328 protein ECU06_0070.